The chain runs to 357 residues: UDP-N-acetylglucosamine--N-acetylmuramyl-(pentapeptide) pyrophosphoryl-undecaprenol N-acetylglucosamine transferase (357 aa).

UDP-N-acetyl-alpha-D-glucosamine is bound by residues 15–17 (TGG), Asn-124, Arg-165, Ser-194, and Gln-288.

This sequence belongs to the glycosyltransferase 28 family. MurG subfamily.

The protein localises to the cell inner membrane. The catalysed reaction is di-trans,octa-cis-undecaprenyl diphospho-N-acetyl-alpha-D-muramoyl-L-alanyl-D-glutamyl-meso-2,6-diaminopimeloyl-D-alanyl-D-alanine + UDP-N-acetyl-alpha-D-glucosamine = di-trans,octa-cis-undecaprenyl diphospho-[N-acetyl-alpha-D-glucosaminyl-(1-&gt;4)]-N-acetyl-alpha-D-muramoyl-L-alanyl-D-glutamyl-meso-2,6-diaminopimeloyl-D-alanyl-D-alanine + UDP + H(+). It functions in the pathway cell wall biogenesis; peptidoglycan biosynthesis. Its function is as follows. Cell wall formation. Catalyzes the transfer of a GlcNAc subunit on undecaprenyl-pyrophosphoryl-MurNAc-pentapeptide (lipid intermediate I) to form undecaprenyl-pyrophosphoryl-MurNAc-(pentapeptide)GlcNAc (lipid intermediate II). The polypeptide is UDP-N-acetylglucosamine--N-acetylmuramyl-(pentapeptide) pyrophosphoryl-undecaprenol N-acetylglucosamine transferase (Trichormus variabilis (strain ATCC 29413 / PCC 7937) (Anabaena variabilis)).